Here is a 175-residue protein sequence, read N- to C-terminus: Enhancer of mRNA-decapping protein 1 (175 aa).

Positions 1–27 (MSTDTMYFNSSRLLPSAGRNKTNNLIK) are enriched in polar residues. 2 disordered regions span residues 1–113 (MSTD…KDDT) and 155–175 (GSTF…PSFL). Ser-2 is modified (N-acetylserine). Low complexity predominate over residues 35–47 (ARGNAAKNANNNN). A compositionally biased stretch (polar residues) spans 58–77 (LPNGQKPNFGHSSNKKPSFN). Position 82 is a phosphoserine (Ser-82). The span at 100–113 (NNKETPRQNNKDDT) shows a compositional bias: basic and acidic residues.

The protein belongs to the EDC family.

It localises to the cytoplasm. Functionally, mRNA-binding protein which stimulates mRNA decapping by DCP1 and DCP2. Involved in the regulation of expression of multiple genes involved in glycolysis and gluconeogenesis. In Saccharomyces cerevisiae (strain ATCC 204508 / S288c) (Baker's yeast), this protein is Enhancer of mRNA-decapping protein 1 (EDC1).